The sequence spans 715 residues: Elongation factor G (715 aa).

The tr-type G domain occupies 8-290 (NRYRNIGICA…AVIDFLPAPT (283 aa)). GTP-binding positions include 17-24 (AHVDAGKT), 88-92 (DTPGH), and 142-145 (NKMD).

The protein belongs to the TRAFAC class translation factor GTPase superfamily. Classic translation factor GTPase family. EF-G/EF-2 subfamily.

Its subcellular location is the cytoplasm. Catalyzes the GTP-dependent ribosomal translocation step during translation elongation. During this step, the ribosome changes from the pre-translocational (PRE) to the post-translocational (POST) state as the newly formed A-site-bound peptidyl-tRNA and P-site-bound deacylated tRNA move to the P and E sites, respectively. Catalyzes the coordinated movement of the two tRNA molecules, the mRNA and conformational changes in the ribosome. This Ectopseudomonas mendocina (strain ymp) (Pseudomonas mendocina) protein is Elongation factor G.